Reading from the N-terminus, the 708-residue chain is DNA-directed RNA polymerase III subunit RPC5 (708 aa).

A compositionally biased stretch (basic and acidic residues) spans 146–155 (DAKHREREAA). Residues 146–170 (DAKHREREAANEAGDSSQDEAEDDV) are disordered. Ser161 and Ser162 each carry phosphoserine. Residue Lys171 forms a Glycyl lysine isopeptide (Lys-Gly) (interchain with G-Cter in SUMO2) linkage. Ser192 is modified (phosphoserine). Tyr224 carries the post-translational modification Phosphotyrosine. Residue Lys432 forms a Glycyl lysine isopeptide (Lys-Gly) (interchain with G-Cter in SUMO2) linkage. Positions 485 to 552 (QLRVPAVPPG…DSFNGHPPQG (68 aa)) are disordered. Lys498 participates in a covalent cross-link: Glycyl lysine isopeptide (Lys-Gly) (interchain with G-Cter in SUMO1); alternate. Lys498 is covalently cross-linked (Glycyl lysine isopeptide (Lys-Gly) (interchain with G-Cter in SUMO2); alternate). Positions 502-519 (VSEEGEEDEEQEAEEEPM) are enriched in acidic residues. Residues Ser503 and Ser522 each carry the phosphoserine modification. The tract at residues 556–708 (TPVARELKAF…MWYLKGTVQS (153 aa)) is required for Pol III complex stability. A Glycyl lysine isopeptide (Lys-Gly) (interchain with G-Cter in SUMO2) cross-link involves residue Lys659.

Component of the RNA polymerase III complex consisting of at least 17 subunits: a ten-subunit horseshoe-shaped catalytic core composed of POLR3A/RPC1, POLR3B/RPC2, POLR1C/RPAC1, POLR1D/RPAC2, POLR3K/RPC10, POLR2E/RPABC1, POLR2F/RPABC2, POLR2H/RPABC3, POLR2K/RPABC4 and POLR2L/RPABC5; the stalk composed of two subunits POLR3H/RPC8 and CRCP/RPC9, forming a structural mobile part that protrudes out of the core and functions primarily in transcription initiation; and additional subunits homologous to general transcription factors of the RNA polymerase II machinery, POLR3D/RPC4-POLR3E/RPC5 heterodimer and POLR3/CRPC3-POLR3F/RPC6-POLR3G/RPC7 heterotrimer.

It is found in the nucleus. In terms of biological role, DNA-dependent RNA polymerase catalyzes the transcription of DNA into RNA using the four ribonucleoside triphosphates as substrates. Specific peripheric component of RNA polymerase III (Pol III) which synthesizes small non-coding RNAs including 5S rRNA, snRNAs, tRNAs and miRNAs from at least 500 distinct genomic loci. Assembles with POLR3D/RPC4 forming a subcomplex that binds the Pol III core. Enables recruitment of Pol III at transcription initiation site and drives transcription initiation from both type 2 and type 3 DNA promoters. Required for efficient transcription termination and reinitiation. Plays a key role in sensing and limiting infection by intracellular bacteria and DNA viruses. Acts as a nuclear and cytosolic DNA sensor involved in innate immune response. Can sense non-self dsDNA that serves as template for transcription into dsRNA. The non-self RNA polymerase III transcripts, such as Epstein-Barr virus-encoded RNAs (EBERs) induce type I interferon and NF-kappa-B through the RIG-I pathway. This Homo sapiens (Human) protein is DNA-directed RNA polymerase III subunit RPC5.